The sequence spans 530 residues: uncharacterized protein (530 aa).

Belongs to the protein kinase superfamily. ADCK protein kinase family.

This is an uncharacterized protein from Clostridium pasteurianum.